An 88-amino-acid chain; its full sequence is Probable Fe(2+)-trafficking protein (88 aa).

The protein belongs to the Fe(2+)-trafficking protein family.

In terms of biological role, could be a mediator in iron transactions between iron acquisition and iron-requiring processes, such as synthesis and/or repair of Fe-S clusters in biosynthetic enzymes. The protein is Probable Fe(2+)-trafficking protein of Teredinibacter turnerae (strain ATCC 39867 / T7901).